Consider the following 368-residue polypeptide: F-box only protein 28 (368 aa).

Residues 1–11 (MAAAAEERMAE) are compositionally biased toward basic and acidic residues. The interval 1-56 (MAAAAEERMAEEGGGGQGDGGSSLASGSTQRQPPPPAPQHPQPGSQALPAPALAPD) is disordered. The span at 12–21 (EGGGGQGDGG) shows a compositional bias: gly residues. Residues 22–31 (SSLASGSTQR) are compositionally biased toward low complexity. The span at 32-41 (QPPPPAPQHP) shows a compositional bias: pro residues. Residues 42–56 (QPGSQALPAPALAPD) show a composition bias toward low complexity. Residues 61 to 109 (NNTLVALPIVAIENILSFMSYDEISQLRLVCKRMDLVCQRMLNQGFLKV) enclose the F-box domain. Phosphoserine is present on residues serine 235 and serine 242. Threonine 270 is subject to Phosphothreonine. The segment at 328 to 368 (MESAVGNSSGSGQNEESPRKRKKATEAIDSLRKSKRLRNRK) is disordered. Low complexity predominate over residues 333 to 342 (GNSSGSGQNE). Residue serine 344 is modified to Phosphoserine.

As to quaternary structure, part of a SCF (SKP1-cullin-F-box) protein ligase complex.

It is found in the chromosome. The protein localises to the centromere. Its subcellular location is the kinetochore. Probably recognizes and binds to some phosphorylated proteins and promotes their ubiquitination and degradation. In Homo sapiens (Human), this protein is F-box only protein 28 (FBXO28).